We begin with the raw amino-acid sequence, 200 residues long: 3-isopropylmalate dehydratase small subunit (200 aa).

This sequence belongs to the LeuD family. LeuD type 1 subfamily. As to quaternary structure, heterodimer of LeuC and LeuD.

The enzyme catalyses (2R,3S)-3-isopropylmalate = (2S)-2-isopropylmalate. The protein operates within amino-acid biosynthesis; L-leucine biosynthesis; L-leucine from 3-methyl-2-oxobutanoate: step 2/4. Catalyzes the isomerization between 2-isopropylmalate and 3-isopropylmalate, via the formation of 2-isopropylmaleate. This is 3-isopropylmalate dehydratase small subunit from Campylobacter jejuni (strain RM1221).